Here is a 231-residue protein sequence, read N- to C-terminus: Uroporphyrinogen-III C-methyltransferase (231 aa).

S-adenosyl-L-homocysteine is bound by residues proline 10, 85-87, 115-116, methionine 166, and alanine 218; these read GGD and TS.

It belongs to the precorrin methyltransferase family. As to quaternary structure, homodimer.

The catalysed reaction is uroporphyrinogen III + 2 S-adenosyl-L-methionine = precorrin-2 + 2 S-adenosyl-L-homocysteine + H(+). The enzyme catalyses uroporphyrinogen III + S-adenosyl-L-methionine = precorrin-1 + S-adenosyl-L-homocysteine + H(+). It carries out the reaction precorrin-1 + S-adenosyl-L-methionine = precorrin-2 + S-adenosyl-L-homocysteine. The protein operates within cofactor biosynthesis; adenosylcobalamin biosynthesis; precorrin-2 from uroporphyrinogen III: step 1/1. Its activity is regulated as follows. Does not show substrate inhibition at uroporphyrinogen III concentrations of up to 20 uM, in contrast to SUMT from Sinorhizobium (previously believed to be P.denitrificans). Catalyzes the two successive C-2 and C-7 methylation reactions involved in the conversion of uroporphyrinogen III to precorrin-2 via the intermediate formation of precorrin-1. It is a step in the biosynthesis of both cobalamin (vitamin B12) and coenzyme F430. This Methanobacterium ivanovii protein is Uroporphyrinogen-III C-methyltransferase (cobA).